Here is a 206-residue protein sequence, read N- to C-terminus: Ras-related protein Rab-18 (206 aa).

Met1 carries the N-acetylmethionine modification. Residues Ser17, Gly20, Lys21, Ser22, Ser23, Asp34, Pro35, Thr40, Gly66, Lys123, and Asp125 each coordinate GTP. Ser22 is a binding site for Mg(2+). Short sequence motifs (switch) lie at residues 31-45 (DTFDPELAATIGVDF) and 63-80 (DTAGQERFRTLTPSYYRG). Thr40 is a Mg(2+) binding site. Ser144 is modified (phosphoserine). Residue Ala152 participates in GTP binding. A lipid anchor (S-palmitoyl cysteine) is attached at Cys199. Cys203 is modified (cysteine methyl ester). Residue Cys203 is the site of S-geranylgeranyl cysteine attachment. Positions 204-206 (SVL) are cleaved as a propeptide — removed in mature form.

It belongs to the small GTPase superfamily. Rab family. Interacts (in GTP-bound form) with ZFYVE1. Interacts with ZW10 and this interaction is enhanced in the presence of ZFYVE1. Interacts with BSCL2. Requires Mg(2+) as cofactor. Expression is high in the brain, moderate in the pituitary, and low in the liver. Detected in all tissues. Highly enriched on apical endocytic structures in polarized epithelial cells of kidney proximal tubules. Detected on both the apical and basolateral domains in epithelial cells of the intestine.

It is found in the endoplasmic reticulum membrane. The protein resides in the golgi apparatus. The protein localises to the cis-Golgi network membrane. It localises to the lipid droplet. Its subcellular location is the apical cell membrane. The catalysed reaction is GTP + H2O = GDP + phosphate + H(+). Its activity is regulated as follows. Regulated by guanine nucleotide exchange factor (GEF) RAB3GAP1-RAB3GAP2 complex at the cis-Golgi membrane which promotes the exchange of bound GDP for free GTP. Regulated by GTPase activating protein (GAP) TBC1D20 at the ER membrane which increases the GTP hydrolysis activity. Inhibited by GDP dissociation inhibitors (GDIs) which prevent Rab-GDP dissociation. Its function is as follows. The small GTPases Rab are key regulators of intracellular membrane trafficking, from the formation of transport vesicles to their fusion with membranes. Rabs cycle between an inactive GDP-bound form and an active GTP-bound form that is able to recruit to membranes different sets of downstream effectors directly responsible for vesicle formation, movement, tethering and fusion. RAB18 is required for the localization of ZFYVE1 to lipid droplets and for its function in mediating the formation of endoplasmic reticulum-lipid droplets (ER-LD) contacts. Also required for maintaining endoplasmic reticulum structure. Plays a role in apical endocytosis/recycling. Plays a key role in eye and brain development and neurodegeneration. This is Ras-related protein Rab-18 from Mus musculus (Mouse).